Reading from the N-terminus, the 94-residue chain is Pyrimidine/purine nucleoside phosphorylase (94 aa).

It belongs to the nucleoside phosphorylase PpnP family.

It catalyses the reaction a purine D-ribonucleoside + phosphate = a purine nucleobase + alpha-D-ribose 1-phosphate. The enzyme catalyses adenosine + phosphate = alpha-D-ribose 1-phosphate + adenine. The catalysed reaction is cytidine + phosphate = cytosine + alpha-D-ribose 1-phosphate. It carries out the reaction guanosine + phosphate = alpha-D-ribose 1-phosphate + guanine. It catalyses the reaction inosine + phosphate = alpha-D-ribose 1-phosphate + hypoxanthine. The enzyme catalyses thymidine + phosphate = 2-deoxy-alpha-D-ribose 1-phosphate + thymine. The catalysed reaction is uridine + phosphate = alpha-D-ribose 1-phosphate + uracil. It carries out the reaction xanthosine + phosphate = alpha-D-ribose 1-phosphate + xanthine. Functionally, catalyzes the phosphorolysis of diverse nucleosides, yielding D-ribose 1-phosphate and the respective free bases. Can use uridine, adenosine, guanosine, cytidine, thymidine, inosine and xanthosine as substrates. Also catalyzes the reverse reactions. In Escherichia coli (strain ATCC 8739 / DSM 1576 / NBRC 3972 / NCIMB 8545 / WDCM 00012 / Crooks), this protein is Pyrimidine/purine nucleoside phosphorylase.